Here is a 680-residue protein sequence, read N- to C-terminus: DNA-directed RNA polymerase subunit beta' (680 aa).

Cys-69, Cys-71, Cys-87, and Cys-90 together coordinate Zn(2+). The Mg(2+) site is built by Asp-489, Asp-491, and Asp-493.

This sequence belongs to the RNA polymerase beta' chain family. RpoC1 subfamily. In plastids the minimal PEP RNA polymerase catalytic core is composed of four subunits: alpha, beta, beta', and beta''. When a (nuclear-encoded) sigma factor is associated with the core the holoenzyme is formed, which can initiate transcription. Mg(2+) serves as cofactor. Zn(2+) is required as a cofactor.

It localises to the plastid. The protein resides in the chloroplast. It carries out the reaction RNA(n) + a ribonucleoside 5'-triphosphate = RNA(n+1) + diphosphate. DNA-dependent RNA polymerase catalyzes the transcription of DNA into RNA using the four ribonucleoside triphosphates as substrates. The protein is DNA-directed RNA polymerase subunit beta' of Aethionema cordifolium (Lebanon stonecress).